A 517-amino-acid polypeptide reads, in one-letter code: Crotonobetaine/carnitine--CoA ligase (517 aa).

The protein belongs to the ATP-dependent AMP-binding enzyme family.

The catalysed reaction is 4-(trimethylamino)butanoate + ATP + CoA = 4-(trimethylamino)butanoyl-CoA + AMP + diphosphate. It catalyses the reaction crotonobetaine + ATP + CoA = crotonobetainyl-CoA + AMP + diphosphate. The enzyme catalyses (R)-carnitine + ATP + CoA = (R)-carnitinyl-CoA + AMP + diphosphate. It functions in the pathway amine and polyamine metabolism; carnitine metabolism. Functionally, catalyzes the transfer of CoA to carnitine, generating the initial carnitinyl-CoA needed for the CaiB reaction cycle. Also has activity toward crotonobetaine and gamma-butyrobetaine. In Escherichia coli O157:H7, this protein is Crotonobetaine/carnitine--CoA ligase.